We begin with the raw amino-acid sequence, 948 residues long: UvrABC system protein A (948 aa).

ATP is bound at residue Gly33–Ser40. The C4-type zinc-finger motif lies at Cys252 to Cys279. ABC transporter domains lie at Trp309–Leu587 and Ala607–Lys935. Residue Gly639–Ser646 participates in ATP binding. The C4-type zinc finger occupies Cys738–Cys764.

It belongs to the ABC transporter superfamily. UvrA family. As to quaternary structure, forms a heterotetramer with UvrB during the search for lesions.

It localises to the cytoplasm. Its function is as follows. The UvrABC repair system catalyzes the recognition and processing of DNA lesions. UvrA is an ATPase and a DNA-binding protein. A damage recognition complex composed of 2 UvrA and 2 UvrB subunits scans DNA for abnormalities. When the presence of a lesion has been verified by UvrB, the UvrA molecules dissociate. The polypeptide is UvrABC system protein A (Staphylococcus aureus (strain MRSA252)).